A 314-amino-acid chain; its full sequence is Olfactory receptor 1E2 (314 aa).

The Extracellular segment spans residues 1–25; the sequence is MMGQNQTSISDFLLLGLPIQPEQQN. The N-linked (GlcNAc...) asparagine glycan is linked to N5. Residues 26-49 form a helical membrane-spanning segment; it reads LCYALFLAMYLTTLLGNLLIIVLI. At 50–57 the chain is on the cytoplasmic side; it reads RLDSHLHT. A helical transmembrane segment spans residues 58–79; the sequence is PMYLFLSNLSFSDLCFSSVTIP. Residues 80–100 lie on the Extracellular side of the membrane; sequence KLLQNMQNQDPSIPYADCLTQ. C97 and C189 are joined by a disulfide. Residues 101–120 traverse the membrane as a helical segment; that stretch reads MYFFLLFGDLESFLLVAMAY. The Cytoplasmic portion of the chain corresponds to 121–139; it reads DRYVAICFPLHYTAIMSPM. Residues 140–158 traverse the membrane as a helical segment; sequence LCLSLVALSWVLTTFHAML. The Extracellular segment spans residues 159–195; it reads HTLLMARLCFCADNVIPHFFCDMSALLKLACSDTRVN. The chain crosses the membrane as a helical span at residues 196–219; it reads EWVIFIMGGLIVVIPFLLILGSYA. At 220–236 the chain is on the cytoplasmic side; it reads RIVSSILKVPSSKGICK. The chain crosses the membrane as a helical span at residues 237 to 259; the sequence is AFSTCGSHLSVVSLFYGTIIGLY. The Extracellular segment spans residues 260-272; it reads LCPSANSSTLKET. N-linked (GlcNAc...) asparagine glycosylation occurs at N265. A helical transmembrane segment spans residues 273-292; it reads VMAMMYTVVTPMLNPFIYSL. Over 293–314 the chain is Cytoplasmic; sequence RNRDMKGALERVICKRKNPFLL.

It belongs to the G-protein coupled receptor 1 family.

The protein localises to the cell membrane. Odorant receptor. In Gorilla gorilla gorilla (Western lowland gorilla), this protein is Olfactory receptor 1E2 (OR1E2).